We begin with the raw amino-acid sequence, 279 residues long: NADH dehydrogenase [ubiquinone] iron-sulfur protein 3, mitochondrial (279 aa).

The transit peptide at 1-27 (MISRTLLKRSLPTVQFLRPFTRSSIRR) directs the protein to the mitochondrion. Residues 249–279 (EPVGEGKDFTPESFKLPTPEPEPEKESDEKK) form a disordered region. Residues 270–279 (EPEKESDEKK) show a composition bias toward basic and acidic residues.

The protein belongs to the complex I 30 kDa subunit family. In terms of assembly, core subunit of respiratory chain NADH dehydrogenase (Complex I).

It localises to the mitochondrion inner membrane. The enzyme catalyses a ubiquinone + NADH + 5 H(+)(in) = a ubiquinol + NAD(+) + 4 H(+)(out). Its function is as follows. Core subunit of the mitochondrial membrane respiratory chain NADH dehydrogenase (Complex I) which catalyzes electron transfer from NADH through the respiratory chain, using ubiquinone as an electron acceptor. Plays a role in cell wall integrity and is involved in osmotic and oxidative resistance, yeast to hypha transition and the ability to damage and invade oral epithelial cells. The chain is NADH dehydrogenase [ubiquinone] iron-sulfur protein 3, mitochondrial (ALI1) from Candida albicans (strain SC5314 / ATCC MYA-2876) (Yeast).